The following is a 199-amino-acid chain: Homeobox protein ceh-19 (199 aa).

The disordered stretch occupies residues 1–42 (MAFNIESLLEKKSNPVEEGNDFEEENDSEKNGEEDEEEEEKN). Residues 18–40 (EGNDFEEENDSEKNGEEDEEEEE) show a composition bias toward acidic residues. Residues 94–153 (ERKPRQAYSARQLDRLETEFQTDKYLSVNKRIQLSQTLNLTETQIKTWFQNRRTKWKKQL) constitute a DNA-binding region (homeobox).

It is found in the nucleus. Its function is as follows. Probable transcription factor. Required for MC motor neuron differentiation and function, including role in modulating pharyngeal pumping. Regulates gene expression of FMRFamide-like neuropeptide flp-2 in MC motor neurons. May act downstream of transcription factor pha-4. This is Homeobox protein ceh-19 (ceh-19) from Caenorhabditis elegans.